Here is an 89-residue protein sequence, read N- to C-terminus: DNA/RNA-binding protein Alba 2 (89 aa).

K12 is subject to N6-acetyllysine. 3 residues coordinate Zn(2+): K14, D18, and D22.

It belongs to the histone-like Alba family. In terms of assembly, forms homodimers and homotetramers. Homodimer at pH below 6.0. Forms homotetramers and higher order homooligomers at near the growth temperature of 80 degrees Celsius and pH 7.0. Interacts with Alba 1; heterodimers lack cooperative DNA-binding behavior and result in more compact chromatin structures compared to Alba 1 homodimers. In terms of processing, acetylated. Acetylation at Lys-12 decreases DNA-binding affinity.

Its subcellular location is the cytoplasm. It localises to the chromosome. Its function is as follows. Binds single-stranded DNA, RNA and double-stranded DNA. Involved in DNA compaction. The polypeptide is DNA/RNA-binding protein Alba 2 (Saccharolobus solfataricus (strain ATCC 35092 / DSM 1617 / JCM 11322 / P2) (Sulfolobus solfataricus)).